Here is a 32-residue protein sequence, read N- to C-terminus: KPNYKRQFEPFSDELIHYINLEDLPESFDARQ.

Positions 1–22 are cleaved as a propeptide — activation peptide; that stretch reads KPNYKRQFEPFSDELIHYINLE.

This sequence belongs to the peptidase C1 family.

Its function is as follows. Thiol protease. This chain is Cathepsin B-like cysteine proteinase, found in Fasciola hepatica (Liver fluke).